The sequence spans 389 residues: Protein DDI1 homolog 1 (389 aa).

The disordered stretch occupies residues 109–132 (SSSSAQSAQRTRRVEQDDEGEKSM). The active site involves aspartate 261.

Belongs to the DDI1 family. As to expression, expressed in most tissues.

Its subcellular location is the cytoplasm. The protein resides in the nucleus. In terms of biological role, aspartic protease. Required for the cleavage and activation of transcription factors such as isoform a of the transcription factor skn-1, which in turn regulates the expression of proteasomal subunits such as rpt-3. Plays a key role in the degradation of the potassium channel slo-1, perhaps acting directly, in cleaving slo-1 upstream of the ER-associated degradation pathway (ERAD), and also indirectly, via activation of the transcription factor skn-1, which mediates proteasomal homeostasis. The sequence is that of Protein DDI1 homolog 1 from Caenorhabditis elegans.